The primary structure comprises 935 residues: Isoleucine--tRNA ligase (935 aa).

The short motif at proline 58–histidine 68 is the 'HIGH' region element. Glutamate 558 lines the L-isoleucyl-5'-AMP pocket. The 'KMSKS' region motif lies at lysine 599–serine 603. Lysine 602 is an ATP binding site. Zn(2+) is bound by residues cysteine 897, cysteine 900, cysteine 917, and cysteine 920.

Belongs to the class-I aminoacyl-tRNA synthetase family. IleS type 1 subfamily. In terms of assembly, monomer. The cofactor is Zn(2+).

The protein localises to the cytoplasm. It catalyses the reaction tRNA(Ile) + L-isoleucine + ATP = L-isoleucyl-tRNA(Ile) + AMP + diphosphate. Functionally, catalyzes the attachment of isoleucine to tRNA(Ile). As IleRS can inadvertently accommodate and process structurally similar amino acids such as valine, to avoid such errors it has two additional distinct tRNA(Ile)-dependent editing activities. One activity is designated as 'pretransfer' editing and involves the hydrolysis of activated Val-AMP. The other activity is designated 'posttransfer' editing and involves deacylation of mischarged Val-tRNA(Ile). The chain is Isoleucine--tRNA ligase from Francisella tularensis subsp. tularensis (strain SCHU S4 / Schu 4).